We begin with the raw amino-acid sequence, 525 residues long: MVSRPEPEGEAMDAELAVAPPGCSHLGSFKVDNWKQNLRAIYQCFVWSGTAEARKRKAKSCICHVCGVHLNRLHSCLYCVFFGCFTKKHIHEHAKAKRHNLAIDLMYGGIYCFLCQDYIYDKDMEIIAKEEQRKAWKMQGVGEKFSTWEPTKRELELLKHNPKRRKITSNCTIGLRGLINLGNTCFMNCIVQALTHTPLLRDFFLSDRHRCEMQSPSSCLVCEMSSLFQEFYSGHRSPHIPYKLLHLVWTHARHLAGYEQQDAHEFLIAALDVLHRHCKGDDNGKKANNPNHCNCIIDQIFTGGLQSDVTCQVCHGVSTTIDPFWDISLDLPGSSTPFWPLSPGSEGNVVNGESHVSGTTTLTDCLRRFTRPEHLGSSAKIKCSGCHSYQESTKQLTMKKLPIVACFHLKRFEHSAKLRRKITTYVSFPLELDMTPFMASSKESRMNGQYQQPTDSLNNDNKYSLFAVVNHQGTLESGHYTSFIRQHKDQWFKCDDAIITKASIKDVLDSEGYLLFYHKQFLEYE.

The UBP-type zinc-finger motif lies at 21–138; the sequence is PGCSHLGSFK…KEEQRKAWKM (118 aa). Residues Cys23, His25, Cys63, Cys66, Cys76, Cys79, Cys84, His89, His93, His99, Cys112, and Cys115 each coordinate Zn(2+). N6-acetyllysine is present on Lys129. Residue Thr147 is modified to Phosphothreonine; by CDK1. Residues 176 to 520 form the USP domain; the sequence is RGLINLGNTC…EGYLLFYHKQ (345 aa). Catalysis depends on Cys185, which acts as the Nucleophile. Ser237 carries the phosphoserine; by CDK1 modification. Catalysis depends on His479, which acts as the Proton acceptor.

Belongs to the peptidase C19 family. UBP8 subfamily. In terms of assembly, component of some SAGA transcription coactivator-HAT complexes, at least composed of ATXN7, ATXN7L3, ENY2, GCN5L2, SUPT3H, TAF10, TRRAP and USP22. Within the SAGA complex, ATXN7L3, ENY2 and USP22 form a subcomplex required for histone deubiquitination. Interacts directly with ATXN7L3; leading to its recruitment to the SAGA complex. Interacts with ATXN7L3 and weakly with ATXN7L3B. Interacts with MED1. Post-translationally, phosphorylated in G2/M phase, but not in G1 phase by CDK1. In terms of processing, ubiquitinated and subsequently degraded in a CDC20-dependent manner. In terms of tissue distribution, moderately expressed in various tissues including heart and skeletal muscle, and weakly expressed in lung and liver.

Its subcellular location is the nucleus. The protein localises to the cytoplasm. The enzyme catalyses Thiol-dependent hydrolysis of ester, thioester, amide, peptide and isopeptide bonds formed by the C-terminal Gly of ubiquitin (a 76-residue protein attached to proteins as an intracellular targeting signal).. Functionally, deubiquitinase that plays a role in several cellular processes including transcriptional regulation, cell cycle progression or innate immunity. As part of the transcription regulatory histone acetylation (HAT) complex SAGA, catalyzes the deubiquitination of both histones H2A and H2B, thereby acting as a transcriptional coactivator. Recruited to specific gene promoters by activators such as MYC, where it is required for transcription. Facilitates cell-cycle progression by stabilizing CCNB1 and antagonizing its proteasome-mediated degradation in a cell cycle-specific manner. Modulates cell cycle progression and apoptosis also by antagonizing TP53 transcriptional activation through deacetylase SIRT1 stabilization. Plays multiple roles in immunity and inflammation. Participates in antiviral response by deubiquitinating the importin KPNA2, leading to IRF3 nuclear translocation and subsequent type I interferon production. Acts as a central regulator of type III IFN signaling by negatively regulating STING1 activation and ubiquitination. Inhibits NLRP3 inflammasome activation by promoting NLRP3 degradation through ATG5-dependent autophagy. Deubiquitinates CD274 to induce its stabilization and thereby participates in maintenance of immune tolerance to self. Controls necroptotic cell death by regulating RIPK3 phosphorylation and ubiquitination. During bacterial infection, promotes pro-inflammatory response by targeting TRAF6 and removing its 'Lys-48'-linked polyubiquitination. The protein is Ubiquitin carboxyl-terminal hydrolase 22 (USP22) of Homo sapiens (Human).